The sequence spans 330 residues: Nitrilase 3 (330 aa).

The CN hydrolase domain maps to 4 to 273; sequence VKAAAVQISP…EGEVIVDLDF (270 aa). Glu-44 acts as the Proton acceptor in catalysis. Lys-128 acts as the Proton donor in catalysis. Catalysis depends on Cys-162, which acts as the Nucleophile. Residues 310-330 form a disordered region; it reads RAAHPVSGAEQGPEDLRTPAA.

Belongs to the carbon-nitrogen hydrolase superfamily. Nitrilase family.

The enzyme catalyses a nitrile + 2 H2O = a carboxylate + NH4(+). In terms of biological role, nitrilases catalyze the mild hydrolytic conversion of organonitriles directly to the corresponding carboxylic acids. This chain is Nitrilase 3, found in Unknown prokaryotic organism.